We begin with the raw amino-acid sequence, 467 residues long: Asparagine--tRNA ligase (467 aa).

This sequence belongs to the class-II aminoacyl-tRNA synthetase family. In terms of assembly, homodimer.

Its subcellular location is the cytoplasm. The enzyme catalyses tRNA(Asn) + L-asparagine + ATP = L-asparaginyl-tRNA(Asn) + AMP + diphosphate + H(+). This chain is Asparagine--tRNA ligase, found in Haemophilus influenzae (strain ATCC 51907 / DSM 11121 / KW20 / Rd).